The primary structure comprises 293 residues: Ribosomal RNA small subunit methyltransferase A (293 aa).

Residues asparagine 29, leucine 31, glycine 56, glutamate 77, aspartate 102, and asparagine 127 each contribute to the S-adenosyl-L-methionine site.

It belongs to the class I-like SAM-binding methyltransferase superfamily. rRNA adenine N(6)-methyltransferase family. RsmA subfamily.

It is found in the cytoplasm. The catalysed reaction is adenosine(1518)/adenosine(1519) in 16S rRNA + 4 S-adenosyl-L-methionine = N(6)-dimethyladenosine(1518)/N(6)-dimethyladenosine(1519) in 16S rRNA + 4 S-adenosyl-L-homocysteine + 4 H(+). Its function is as follows. Specifically dimethylates two adjacent adenosines (A1518 and A1519) in the loop of a conserved hairpin near the 3'-end of 16S rRNA in the 30S particle. May play a critical role in biogenesis of 30S subunits. This Geobacillus thermodenitrificans (strain NG80-2) protein is Ribosomal RNA small subunit methyltransferase A.